The following is a 222-amino-acid chain: MKAAVVVFPGSNCDRDLAVAFEQAGFDVSMVWHKDSELPEGVDIVGVPGGFSYGDYLRCGAIAAQSPICKAVVAHAERGGYALGVCNGFQILTETGVLPGALLRNAGLKYICKTVDLAVATSDSAFTQGYNAGDVIGVPIAHHDGNYYADDATVQMLKDQDRVAFTYVDNPNGSVADIAGILSENRRVLGMMPHPERAADEGHGGTDGVAMFRALSGLLTDA.

The 220-residue stretch at 3–222 (AAVVVFPGSN…RALSGLLTDA (220 aa)) folds into the Glutamine amidotransferase type-1 domain. Cys-86 functions as the Nucleophile in the catalytic mechanism. Catalysis depends on residues His-194 and Glu-196.

Part of the FGAM synthase complex composed of 1 PurL, 1 PurQ and 2 PurS subunits.

It localises to the cytoplasm. It catalyses the reaction N(2)-formyl-N(1)-(5-phospho-beta-D-ribosyl)glycinamide + L-glutamine + ATP + H2O = 2-formamido-N(1)-(5-O-phospho-beta-D-ribosyl)acetamidine + L-glutamate + ADP + phosphate + H(+). The enzyme catalyses L-glutamine + H2O = L-glutamate + NH4(+). The protein operates within purine metabolism; IMP biosynthesis via de novo pathway; 5-amino-1-(5-phospho-D-ribosyl)imidazole from N(2)-formyl-N(1)-(5-phospho-D-ribosyl)glycinamide: step 1/2. In terms of biological role, part of the phosphoribosylformylglycinamidine synthase complex involved in the purines biosynthetic pathway. Catalyzes the ATP-dependent conversion of formylglycinamide ribonucleotide (FGAR) and glutamine to yield formylglycinamidine ribonucleotide (FGAM) and glutamate. The FGAM synthase complex is composed of three subunits. PurQ produces an ammonia molecule by converting glutamine to glutamate. PurL transfers the ammonia molecule to FGAR to form FGAM in an ATP-dependent manner. PurS interacts with PurQ and PurL and is thought to assist in the transfer of the ammonia molecule from PurQ to PurL. The protein is Phosphoribosylformylglycinamidine synthase subunit PurQ of Ruegeria sp. (strain TM1040) (Silicibacter sp.).